Here is a 64-residue protein sequence, read N- to C-terminus: Disintegrin VB7B (64 aa).

The 64-residue stretch at Glu1–Asn64 folds into the Disintegrin domain. 4 cysteine pairs are disulfide-bonded: Cys10–Cys33, Cys24–Cys30, Cys29–Cys54, and Cys42–Cys61. The short motif at Lys46–Asp48 is the Cell attachment site; atypical (KGD) element.

It belongs to the venom metalloproteinase (M12B) family. P-II subfamily. P-IIe sub-subfamily. In terms of assembly, heterodimer with VB7A; disulfide-linked. In terms of tissue distribution, expressed by the venom gland.

It is found in the secreted. Functionally, poor inhibitor of platelet aggregation. The disintegrin inhibits the adhesion of cells expressing the RGD-dependent integrin alpha-5/beta-1 (ITGA5/ITGB1) to immobilized fibronectin. Inhibition on alpha-IIb/beta-3 (ITGA2B/ITGB3) is low. This chain is Disintegrin VB7B, found in Vipera berus berus (Common viper).